Reading from the N-terminus, the 1185-residue chain is ELMO domain-containing protein F (1185 aa).

8 disordered regions span residues 88-133, 176-196, 361-409, 566-628, 642-805, 819-868, 883-989, and 1044-1114; these read QPSP…GNNN, ISTNPNNNSNNNNNNNNNTAE, NNNS…VENE, KSTD…NTKS, ETER…KSSG, LGEK…PYII, DLDF…TQVT, and QKQK…KPVL. 4 stretches are compositionally biased toward low complexity: residues 94–127, 176–194, 361–406, and 587–613; these read STIHNNSSTSINQSSSPSSSSSTTPSSSTQSSPI, ISTNPNNNSNNNNNNNNNT, NNNS…NNNV, and PQSQQQSQQQTQQTQQPASPLQTSSSS. The 214-residue stretch at 275–488 folds into the ELMO domain; sequence DRQNVLSFLN…KTRAVLSRIK (214 aa). A compositionally biased stretch (polar residues) spans 648–665; the sequence is SLTGSNGITDGGDSNPNS. Residues 688 to 699 show a composition bias toward low complexity; it reads SENGSSSSFSFE. Positions 721-732 are enriched in polar residues; the sequence is FNSLTGELTMNI. Low complexity-rich tracts occupy residues 733–760 and 767–780; these read SSSSSLEGNQQQQQQQSTNSSTTSPNVS and TTTTTNTTTATTTT. The span at 781–790 shows a compositional bias: polar residues; that stretch reads DDQSQQQVPP. Basic residues predominate over residues 829 to 841; sequence KVKSKKEKKKKSK. 4 stretches are compositionally biased toward low complexity: residues 853 to 864, 912 to 974, 1053 to 1072, and 1096 to 1109; these read NNSANNSSYNNS, SSSN…QQPQ, DENQNQNNNNNKLSDNSSNE, and GRNSTLNSGSSSLS.

This chain is ELMO domain-containing protein F (elmoF), found in Dictyostelium discoideum (Social amoeba).